The primary structure comprises 126 residues: B3 domain-containing protein At5g54067 (126 aa).

Positions 20–118 (SDIVGNVVLP…KFVVLNFQYS (99 aa)) form a DNA-binding region, TF-B3.

It localises to the nucleus. This Arabidopsis thaliana (Mouse-ear cress) protein is B3 domain-containing protein At5g54067.